Reading from the N-terminus, the 143-residue chain is D-aminoacyl-tRNA deacylase (143 aa).

A Gly-cisPro motif, important for rejection of L-amino acids motif is present at residues 135–136 (GP).

Belongs to the DTD family. Homodimer.

It localises to the cytoplasm. It carries out the reaction glycyl-tRNA(Ala) + H2O = tRNA(Ala) + glycine + H(+). The catalysed reaction is a D-aminoacyl-tRNA + H2O = a tRNA + a D-alpha-amino acid + H(+). An aminoacyl-tRNA editing enzyme that deacylates mischarged D-aminoacyl-tRNAs. Also deacylates mischarged glycyl-tRNA(Ala), protecting cells against glycine mischarging by AlaRS. Acts via tRNA-based rather than protein-based catalysis; rejects L-amino acids rather than detecting D-amino acids in the active site. By recycling D-aminoacyl-tRNA to D-amino acids and free tRNA molecules, this enzyme counteracts the toxicity associated with the formation of D-aminoacyl-tRNA entities in vivo and helps enforce protein L-homochirality. This chain is D-aminoacyl-tRNA deacylase, found in Nocardia farcinica (strain IFM 10152).